The primary structure comprises 382 residues: ATP phosphoribosyltransferase regulatory subunit (382 aa).

It belongs to the class-II aminoacyl-tRNA synthetase family. HisZ subfamily. Heteromultimer composed of HisG and HisZ subunits.

Its subcellular location is the cytoplasm. It functions in the pathway amino-acid biosynthesis; L-histidine biosynthesis; L-histidine from 5-phospho-alpha-D-ribose 1-diphosphate: step 1/9. Its function is as follows. Required for the first step of histidine biosynthesis. May allow the feedback regulation of ATP phosphoribosyltransferase activity by histidine. This is ATP phosphoribosyltransferase regulatory subunit from Burkholderia thailandensis (strain ATCC 700388 / DSM 13276 / CCUG 48851 / CIP 106301 / E264).